Reading from the N-terminus, the 332-residue chain is F-box/SPRY domain-containing protein 1 (332 aa).

Positions 1 to 82 are disordered; sequence MAENDGETIV…RSPRRPEVSA (82 aa). Polar residues-rich tracts occupy residues 15-28 and 49-64; these read CNLT…SSGL and NPSS…QLTP. One can recognise an F-box domain in the interval 79-127; sequence EVSASRLPLKVLNQIFQYLPLKDLRSAMLTCHSWNNALSMEDSDIWQYL. The region spanning 138–330 is the B30.2/SPRY domain; it reads SDPFLLAELG…VTMVYVGSPQ (193 aa).

The protein belongs to the FBXO45/Fsn family. As to quaternary structure, component of an SCF (SKP1-CUL1-F-box protein) E3 ubiquitin ligase complex composed of cul-1, fsn-1, rpm-1 and skr-1. Interacts (via SPRY domain) with scd-2 (via cytoplasmic domain). Interacts (via SPRY domain) with convertase egl-3 (via C-terminus). As to expression, expressed in GABAergic neuromuscular junctions (NMJs).

The protein localises to the synapse. Its pathway is protein modification; protein ubiquitination. Functionally, component of a SCF (SKP1-CUL1-F-box protein) E3 ubiquitin ligase complex which is required for the restriction and/or maturation of synapses in GABAergic neuromuscular junction (NMJ) presynaptic neurons. Promotes NRJ synapse development and synaptic transmission by negatively regulating the daf-2/InsR pathway in muscles. By targeting convertase egl-3 for degradation, negatively modulates insulin-like protein ins-4 and ins-6 processing. May stabilize synapse formation by promoting the down-regulation of scd-2. Regulates axon termination in PLM and ALM neurons. This chain is F-box/SPRY domain-containing protein 1 (fsn-1), found in Caenorhabditis elegans.